The sequence spans 306 residues: tRNA dimethylallyltransferase (306 aa).

9-16 lines the ATP pocket; the sequence is GPTAIGKT. Substrate is bound at residue 11–16; it reads TAIGKT. An interaction with substrate tRNA region spans residues 34–37; that stretch reads DSMQ.

The protein belongs to the IPP transferase family. Monomer. Mg(2+) serves as cofactor.

It catalyses the reaction adenosine(37) in tRNA + dimethylallyl diphosphate = N(6)-dimethylallyladenosine(37) in tRNA + diphosphate. In terms of biological role, catalyzes the transfer of a dimethylallyl group onto the adenine at position 37 in tRNAs that read codons beginning with uridine, leading to the formation of N6-(dimethylallyl)adenosine (i(6)A). This is tRNA dimethylallyltransferase from Lactobacillus acidophilus (strain ATCC 700396 / NCK56 / N2 / NCFM).